The following is a 242-amino-acid chain: DNA repair protein RecO (242 aa).

It belongs to the RecO family.

In terms of biological role, involved in DNA repair and RecF pathway recombination. The sequence is that of DNA repair protein RecO from Paracoccus denitrificans (strain Pd 1222).